A 204-amino-acid polypeptide reads, in one-letter code: MELKIVNPGGAQGTVNVSEVAFGREFNQDLVHQAVVAYMAGARQGTKAQKTRAEVSGGGKKPWRQKGTGRARAGTIRSPIWRGGGVTFAAKPRDFEQKLNRKMYRAALQCILSELNRQDRLIVVESFDVDAPKTKALVQKLAQYDLTDALIVTEDLSENLYLASRNLHKVGVSDVQGVDPVSLIGYDKVVVTVPALKKFEEILG.

A disordered region spans residues 47–69 (KAQKTRAEVSGGGKKPWRQKGTG).

Belongs to the universal ribosomal protein uL4 family. Part of the 50S ribosomal subunit.

Its function is as follows. One of the primary rRNA binding proteins, this protein initially binds near the 5'-end of the 23S rRNA. It is important during the early stages of 50S assembly. It makes multiple contacts with different domains of the 23S rRNA in the assembled 50S subunit and ribosome. Forms part of the polypeptide exit tunnel. The sequence is that of Large ribosomal subunit protein uL4 from Cellvibrio japonicus (strain Ueda107) (Pseudomonas fluorescens subsp. cellulosa).